The chain runs to 211 residues: Probable nicotinate-nucleotide adenylyltransferase (211 aa).

Belongs to the NadD family.

It carries out the reaction nicotinate beta-D-ribonucleotide + ATP + H(+) = deamido-NAD(+) + diphosphate. Its pathway is cofactor biosynthesis; NAD(+) biosynthesis; deamido-NAD(+) from nicotinate D-ribonucleotide: step 1/1. Its function is as follows. Catalyzes the reversible adenylation of nicotinate mononucleotide (NaMN) to nicotinic acid adenine dinucleotide (NaAD). The protein is Probable nicotinate-nucleotide adenylyltransferase of Lactiplantibacillus plantarum (strain ATCC BAA-793 / NCIMB 8826 / WCFS1) (Lactobacillus plantarum).